The following is a 283-amino-acid chain: GDP-polyphosphate phosphotransferase (283 aa).

It belongs to the polyphosphate kinase 2 (PPK2) family. Class I subfamily.

It carries out the reaction [phosphate](n) + GTP = [phosphate](n+1) + GDP. Its function is as follows. Uses inorganic polyphosphate (polyP) as a donor to convert GDP to GTP. The polypeptide is GDP-polyphosphate phosphotransferase (Mycolicibacterium smegmatis (strain ATCC 700084 / mc(2)155) (Mycobacterium smegmatis)).